The chain runs to 141 residues: Putative nickel-responsive regulator (141 aa).

4 residues coordinate Ni(2+): His80, His91, His93, and Cys99.

Belongs to the transcriptional regulatory CopG/NikR family. The cofactor is Ni(2+).

Transcriptional regulator. The chain is Putative nickel-responsive regulator from Methanococcus maripaludis (strain C5 / ATCC BAA-1333).